Here is a 234-residue protein sequence, read N- to C-terminus: Ribonuclease HII (234 aa).

The region spanning 16–207 (ALVAGVDEAG…VRRMLTPKAI (192 aa)) is the RNase H type-2 domain. Positions 22, 23, and 115 each coordinate a divalent metal cation.

This sequence belongs to the RNase HII family. It depends on Mn(2+) as a cofactor. Requires Mg(2+) as cofactor.

The protein localises to the cytoplasm. It carries out the reaction Endonucleolytic cleavage to 5'-phosphomonoester.. In terms of biological role, endonuclease that specifically degrades the RNA of RNA-DNA hybrids. The polypeptide is Ribonuclease HII (Xylella fastidiosa (strain M23)).